Consider the following 266-residue polypeptide: tRNA (guanine-N(7)-)-methyltransferase (266 aa).

The segment at 1-32 (MSDHGRMHIPESGLATPAAAHSDDPPHPHFNR) is disordered. S-adenosyl-L-methionine is bound by residues E96, E121, D148, and D171. The active site involves D171. The substrate site is built by K175 and D207.

The protein belongs to the class I-like SAM-binding methyltransferase superfamily. TrmB family.

The catalysed reaction is guanosine(46) in tRNA + S-adenosyl-L-methionine = N(7)-methylguanosine(46) in tRNA + S-adenosyl-L-homocysteine. Its pathway is tRNA modification; N(7)-methylguanine-tRNA biosynthesis. In terms of biological role, catalyzes the formation of N(7)-methylguanine at position 46 (m7G46) in tRNA. This is tRNA (guanine-N(7)-)-methyltransferase from Mycolicibacterium vanbaalenii (strain DSM 7251 / JCM 13017 / BCRC 16820 / KCTC 9966 / NRRL B-24157 / PYR-1) (Mycobacterium vanbaalenii).